The chain runs to 591 residues: Metalloendopeptidase OPG085 (591 aa).

Position 41 (histidine 41) interacts with Zn(2+). Glutamate 44 is an active-site residue. Zn(2+) contacts are provided by histidine 45 and glutamate 112.

This sequence belongs to the peptidase M44 family. The cofactor is Zn(2+). Post-translationally, undergoes proteolytic processing during the course of infection. May be cleaved into 46 kDa and 22 kDa products (Potential).

The protein resides in the virion. Functionally, probably involved in maturation of some viral proteins by processing them preferentially at Ala-Gly-|-Ser/Thr/Lys motifs. Does not seem to be responsible for the cleavage of major core proteins. The sequence is that of Metalloendopeptidase OPG085 (OPG085) from Monkeypox virus.